The chain runs to 429 residues: Adenylosuccinate synthetase (429 aa).

Residues 12–18 (GDEGKGK) and 40–42 (GHT) contribute to the GTP site. The active-site Proton acceptor is Asp13. Positions 13 and 40 each coordinate Mg(2+). IMP-binding positions include 13–16 (DEGK), 38–41 (NAGH), Thr128, Arg142, Gln223, Thr238, and Arg302. Residue His41 is the Proton donor of the active site. 298–304 (TVTKRPR) is a substrate binding site. Residues Arg304, 330–332 (CLD), and 412–414 (SVG) each bind GTP.

It belongs to the adenylosuccinate synthetase family. As to quaternary structure, homodimer. The cofactor is Mg(2+).

The protein localises to the cytoplasm. The enzyme catalyses IMP + L-aspartate + GTP = N(6)-(1,2-dicarboxyethyl)-AMP + GDP + phosphate + 2 H(+). It participates in purine metabolism; AMP biosynthesis via de novo pathway; AMP from IMP: step 1/2. Functionally, plays an important role in the de novo pathway of purine nucleotide biosynthesis. Catalyzes the first committed step in the biosynthesis of AMP from IMP. The protein is Adenylosuccinate synthetase of Lactiplantibacillus plantarum (strain ATCC BAA-793 / NCIMB 8826 / WCFS1) (Lactobacillus plantarum).